Here is a 238-residue protein sequence, read N- to C-terminus: B-box zinc finger protein 25 (238 aa).

Zn(2+) contacts are provided by cysteine 5, cysteine 8, cysteine 28, histidine 33, cysteine 57, cysteine 60, cysteine 80, and histidine 85. A B box-type 1; atypical zinc finger spans residues 5 to 47; that stretch reads CDVCEKAPATLICCADEAALCAKCDVEVHAANKLASKHQRLFL. The B box-type 2; atypical zinc finger occupies 57–99; the sequence is CDICLEKAAFIFCVEDRALLCRDCDEATHAPNTRSANHQRFLA. A disordered region spans residues 115 to 139; sequence VEKNHFDPSNQQSLSKPPTQQPAAP. A compositionally biased stretch (polar residues) spans 121–137; sequence DPSNQQSLSKPPTQQPA. The segment at 226–238 is interaction with COP1; it reads DDEEEHFLVPDLG.

Interacts with COP1 WD40 domain. Interacts with HY5 and HYH. COP1-mediated ubiquitination and subsequent proteasomal degradation of BBX25/STH occurs in the dark.

The protein resides in the nucleus. In terms of biological role, acts as a negative regulator of seedling photomorphogenesis. BBX25/STH and BBX24/STO function as transcriptional corepressors of HY5 activity, leading to the down-regulation of BBX22 expression. BBX25/STH acts additively with BBX24/STO during de-etiolation and the hypocotyl shade avoidance response. This chain is B-box zinc finger protein 25, found in Arabidopsis thaliana (Mouse-ear cress).